The following is a 715-amino-acid chain: Fatty acid oxidation complex subunit alpha (715 aa).

An enoyl-CoA hydratase/isomerase region spans residues 1–189; sequence MIYQGETLTV…KVGAIDAVVA (189 aa). D296 lines the substrate pocket. The tract at residues 311–715 is 3-hydroxyacyl-CoA dehydrogenase; that stretch reads AKATSHAAVL…EMAAQGKTFY (405 aa). Residues M325, D344, 401–403, K408, and S430 contribute to the NAD(+) site; that span reads VVE. H451 acts as the For 3-hydroxyacyl-CoA dehydrogenase activity in catalysis. An NAD(+)-binding site is contributed by N454. 2 residues coordinate substrate: N501 and Y661.

In the N-terminal section; belongs to the enoyl-CoA hydratase/isomerase family. It in the C-terminal section; belongs to the 3-hydroxyacyl-CoA dehydrogenase family. In terms of assembly, heterotetramer of two alpha chains (FadB) and two beta chains (FadA).

The catalysed reaction is a (3S)-3-hydroxyacyl-CoA + NAD(+) = a 3-oxoacyl-CoA + NADH + H(+). The enzyme catalyses a (3S)-3-hydroxyacyl-CoA = a (2E)-enoyl-CoA + H2O. It carries out the reaction a 4-saturated-(3S)-3-hydroxyacyl-CoA = a (3E)-enoyl-CoA + H2O. It catalyses the reaction (3S)-3-hydroxybutanoyl-CoA = (3R)-3-hydroxybutanoyl-CoA. The catalysed reaction is a (3Z)-enoyl-CoA = a 4-saturated (2E)-enoyl-CoA. The enzyme catalyses a (3E)-enoyl-CoA = a 4-saturated (2E)-enoyl-CoA. The protein operates within lipid metabolism; fatty acid beta-oxidation. Its function is as follows. Involved in the aerobic and anaerobic degradation of long-chain fatty acids via beta-oxidation cycle. Catalyzes the formation of 3-oxoacyl-CoA from enoyl-CoA via L-3-hydroxyacyl-CoA. It can also use D-3-hydroxyacyl-CoA and cis-3-enoyl-CoA as substrate. The polypeptide is Fatty acid oxidation complex subunit alpha (Aeromonas hydrophila subsp. hydrophila (strain ATCC 7966 / DSM 30187 / BCRC 13018 / CCUG 14551 / JCM 1027 / KCTC 2358 / NCIMB 9240 / NCTC 8049)).